Reading from the N-terminus, the 308-residue chain is Acetylglutamate kinase (308 aa).

Substrate contacts are provided by residues 86-87 (GG), arginine 108, and asparagine 201.

This sequence belongs to the acetylglutamate kinase family. ArgB subfamily.

It is found in the cytoplasm. The enzyme catalyses N-acetyl-L-glutamate + ATP = N-acetyl-L-glutamyl 5-phosphate + ADP. It participates in amino-acid biosynthesis; L-arginine biosynthesis; N(2)-acetyl-L-ornithine from L-glutamate: step 2/4. Its function is as follows. Catalyzes the ATP-dependent phosphorylation of N-acetyl-L-glutamate. This chain is Acetylglutamate kinase, found in Prochlorococcus marinus (strain MIT 9313).